Consider the following 121-residue polypeptide: Large ribosomal subunit protein bL12 (121 aa).

This sequence belongs to the bacterial ribosomal protein bL12 family. As to quaternary structure, homodimer. Part of the ribosomal stalk of the 50S ribosomal subunit. Forms a multimeric L10(L12)X complex, where L10 forms an elongated spine to which 2 to 4 L12 dimers bind in a sequential fashion. Binds GTP-bound translation factors.

In terms of biological role, forms part of the ribosomal stalk which helps the ribosome interact with GTP-bound translation factors. Is thus essential for accurate translation. This is Large ribosomal subunit protein bL12 from Shewanella baltica (strain OS223).